The following is a 492-amino-acid chain: 2,3-bisphosphoglycerate-independent phosphoglycerate mutase (492 aa).

The Mn(2+) site is built by Asp-11 and Ser-61. The Phosphoserine intermediate role is filled by Ser-61. Substrate contacts are provided by residues His-118, Arg-147–Asp-148, Arg-178, Arg-184, Arg-248–Arg-251, and Lys-320. Residues Asp-386, His-390, Asp-427, His-428, and His-445 each contribute to the Mn(2+) site.

Belongs to the BPG-independent phosphoglycerate mutase family. As to quaternary structure, monomer. Mn(2+) is required as a cofactor.

The enzyme catalyses (2R)-2-phosphoglycerate = (2R)-3-phosphoglycerate. It participates in carbohydrate degradation; glycolysis; pyruvate from D-glyceraldehyde 3-phosphate: step 3/5. In terms of biological role, catalyzes the interconversion of 2-phosphoglycerate and 3-phosphoglycerate. The protein is 2,3-bisphosphoglycerate-independent phosphoglycerate mutase of Campylobacter jejuni subsp. jejuni serotype O:2 (strain ATCC 700819 / NCTC 11168).